The chain runs to 303 residues: N-acetylmuramic acid 6-phosphate etherase (303 aa).

The region spanning 60–223 (ATASLQAGGR…STGVMVKLGK (164 aa)) is the SIS domain. Glu-88 serves as the catalytic Proton donor. The active site involves Glu-119.

It belongs to the GCKR-like family. MurNAc-6-P etherase subfamily. As to quaternary structure, homodimer.

It carries out the reaction N-acetyl-D-muramate 6-phosphate + H2O = N-acetyl-D-glucosamine 6-phosphate + (R)-lactate. It functions in the pathway amino-sugar metabolism; 1,6-anhydro-N-acetylmuramate degradation. The protein operates within amino-sugar metabolism; N-acetylmuramate degradation. It participates in cell wall biogenesis; peptidoglycan recycling. Specifically catalyzes the cleavage of the D-lactyl ether substituent of MurNAc 6-phosphate, producing GlcNAc 6-phosphate and D-lactate. Together with AnmK, is also required for the utilization of anhydro-N-acetylmuramic acid (anhMurNAc) either imported from the medium or derived from its own cell wall murein, and thus plays a role in cell wall recycling. The polypeptide is N-acetylmuramic acid 6-phosphate etherase (Pectobacterium atrosepticum (strain SCRI 1043 / ATCC BAA-672) (Erwinia carotovora subsp. atroseptica)).